The following is a 206-amino-acid chain: 2,3-bisphosphoglycerate-dependent phosphoglycerate mutase (206 aa).

Residues 9 to 16 (RHGQSEWN), 22 to 23 (TG), arginine 61, 88 to 91 (ERDY), lysine 99, 115 to 116 (RR), and 159 to 160 (GN) each bind substrate. Histidine 10 acts as the Tele-phosphohistidine intermediate in catalysis. Glutamate 88 (proton donor/acceptor) is an active-site residue.

Belongs to the phosphoglycerate mutase family. BPG-dependent PGAM subfamily. As to quaternary structure, homodimer.

The enzyme catalyses (2R)-2-phosphoglycerate = (2R)-3-phosphoglycerate. The protein operates within carbohydrate degradation; glycolysis; pyruvate from D-glyceraldehyde 3-phosphate: step 3/5. Its function is as follows. Catalyzes the interconversion of 2-phosphoglycerate and 3-phosphoglycerate. This is 2,3-bisphosphoglycerate-dependent phosphoglycerate mutase from Brucella abortus (strain S19).